Reading from the N-terminus, the 678-residue chain is Pescadillo homolog (678 aa).

Positions 283–303 (EEEEPEEVDSEAGDEDDDDLP) are enriched in acidic residues. The disordered stretch occupies residues 283–316 (EEEEPEEVDSEAGDEDDDDLPVLDSGTRRRRAAA). The 91-residue stretch at 361 to 451 (VCGSLFRGRV…VLMPTDLYAP (91 aa)) folds into the BRCT domain. The stretch at 552–587 (MTRKARKMYNNMKQKEAAKQERVQQLESKKAKLAAT) forms a coiled coil. The segment at 563–678 (MKQKEAAKQE…DAAPAKRQRR (116 aa)) is disordered. Residues 564 to 581 (KQKEAAKQERVQQLESKK) are compositionally biased toward basic and acidic residues. 2 stretches are compositionally biased toward low complexity: residues 597-618 (KPAA…VAAS) and 630-661 (APAP…AAKE). A compositionally biased stretch (basic and acidic residues) spans 662–672 (APAKGGKDAAP).

This sequence belongs to the pescadillo family.

The protein localises to the nucleus. Its subcellular location is the nucleolus. It is found in the nucleoplasm. In terms of biological role, required for maturation of ribosomal RNAs and formation of the large ribosomal subunit. The sequence is that of Pescadillo homolog from Chlamydomonas reinhardtii (Chlamydomonas smithii).